The chain runs to 1184 residues: DNA-directed RNA polymerase subunit beta (1184 aa).

The tract at residues 1160 to 1184 (DDDFTNQNDAFNIVQPENAAAEKTE) is disordered.

The protein belongs to the RNA polymerase beta chain family. The RNAP catalytic core consists of 2 alpha, 1 beta, 1 beta' and 1 omega subunit. When a sigma factor is associated with the core the holoenzyme is formed, which can initiate transcription.

The enzyme catalyses RNA(n) + a ribonucleoside 5'-triphosphate = RNA(n+1) + diphosphate. Its function is as follows. DNA-dependent RNA polymerase catalyzes the transcription of DNA into RNA using the four ribonucleoside triphosphates as substrates. The chain is DNA-directed RNA polymerase subunit beta from Listeria welshimeri serovar 6b (strain ATCC 35897 / DSM 20650 / CCUG 15529 / CIP 8149 / NCTC 11857 / SLCC 5334 / V8).